The sequence spans 129 residues: Small ribosomal subunit protein uS9 (129 aa).

The disordered stretch occupies residues 108 to 129 (RMVERKKYGKKKARKSFQFSKR). Over residues 114-129 (KYGKKKARKSFQFSKR) the composition is skewed to basic residues.

It belongs to the universal ribosomal protein uS9 family.

This is Small ribosomal subunit protein uS9 from Chlorobaculum tepidum (strain ATCC 49652 / DSM 12025 / NBRC 103806 / TLS) (Chlorobium tepidum).